The chain runs to 308 residues: MVKTVIFGHKNPDTDTICSSIAYADLKTKLGHEVAPVRLGEVNLETQFALDKFNIHAPELIERVEDGAEVILVDHNEFQQSVDNIENATIREVIDHHRISNFETKEPLYFRAEPVGCTATILNKMYKENDISVDKNIAGILLSAIISDSLLLKSPTCTEEDVQAAHELAEIAGVDLESYGLDMLKAGADLSDKTVKDLITMDAKEFAMGNAKVEIAQVNAVDTNEIYKLHDKLVEVITSRINDNDLDLFLFVVTDILNNDSEVLAIGNGKDKVNAAFNVTLDSTNRALLKGVVSRKKQIVTVLTEQFK.

Positions 9, 13, 15, 74, 96, and 148 each coordinate Mn(2+).

Belongs to the PPase class C family. Mn(2+) is required as a cofactor.

The protein localises to the cytoplasm. It catalyses the reaction diphosphate + H2O = 2 phosphate + H(+). This chain is Probable manganese-dependent inorganic pyrophosphatase, found in Oceanobacillus iheyensis (strain DSM 14371 / CIP 107618 / JCM 11309 / KCTC 3954 / HTE831).